A 422-amino-acid polypeptide reads, in one-letter code: Validoxylamine A glucosyltransferase (422 aa).

The protein belongs to the glycosyltransferase 2 family. Mn(2+) is required as a cofactor.

The catalysed reaction is validoxylamine A + UDP-alpha-D-glucose = validamycin A + UDP + H(+). Its function is as follows. Involved in the biosynthesis of the antifungal agent validamycin A. Catalyzes the final attachment of glucose from UDP-alpha-D-glucose to validoxylamine A to yield validamycin A. UDP-glucose is the most efficient glycosyl donor, whereas GDP-glucose and ADP-glucose are much less efficient. ValG also utilizes UDP-galactose as substrate to produce the new validamycin analog, 4''-epi-validamycin A. The protein is Validoxylamine A glucosyltransferase of Streptomyces hygroscopicus subsp. jinggangensis (strain 5008).